Reading from the N-terminus, the 205-residue chain is Small ribosomal subunit protein uS4 (205 aa).

In terms of domain architecture, S4 RNA-binding spans 94 to 154 (SRLDNSVYRA…TRKDGKIRKN (61 aa)).

It belongs to the universal ribosomal protein uS4 family. In terms of assembly, part of the 30S ribosomal subunit. Contacts protein S5. The interaction surface between S4 and S5 is involved in control of translational fidelity.

Its function is as follows. One of the primary rRNA binding proteins, it binds directly to 16S rRNA where it nucleates assembly of the body of the 30S subunit. Functionally, with S5 and S12 plays an important role in translational accuracy. In Mesomycoplasma hyopneumoniae (strain 232) (Mycoplasma hyopneumoniae), this protein is Small ribosomal subunit protein uS4.